The chain runs to 301 residues: Polyamine aminopropyltransferase (301 aa).

In terms of domain architecture, PABS spans 4 to 240 (WHWLLEWQTP…GLWGFVYGGV (237 aa)). Gln33 contributes to the S-methyl-5'-thioadenosine binding site. Positions 64 and 89 each coordinate spermidine. S-methyl-5'-thioadenosine is bound by residues Asp109 and 141-142 (DG). The Proton acceptor role is filled by Asp159.

The protein belongs to the spermidine/spermine synthase family. Homodimer or homotetramer.

Its subcellular location is the cytoplasm. The enzyme catalyses S-adenosyl 3-(methylsulfanyl)propylamine + putrescine = S-methyl-5'-thioadenosine + spermidine + H(+). It functions in the pathway amine and polyamine biosynthesis; spermidine biosynthesis; spermidine from putrescine: step 1/1. Catalyzes the irreversible transfer of a propylamine group from the amino donor S-adenosylmethioninamine (decarboxy-AdoMet) to putrescine (1,4-diaminobutane) to yield spermidine. This is Polyamine aminopropyltransferase from Saccharolobus islandicus (strain Y.N.15.51 / Yellowstone #2) (Sulfolobus islandicus).